Reading from the N-terminus, the 31-residue chain is Cytochrome b6-f complex subunit 6 (31 aa).

A helical transmembrane segment spans residues 4–24 (LISYISLLAGFVIIASVFYLA).

This sequence belongs to the PetL family. As to quaternary structure, the 4 large subunits of the cytochrome b6-f complex are cytochrome b6, subunit IV (17 kDa polypeptide, PetD), cytochrome f and the Rieske protein, while the 4 small subunits are PetG, PetL, PetM and PetN. The complex functions as a dimer.

Its subcellular location is the plastid. It localises to the chloroplast thylakoid membrane. Functionally, component of the cytochrome b6-f complex, which mediates electron transfer between photosystem II (PSII) and photosystem I (PSI), cyclic electron flow around PSI, and state transitions. PetL is important for photoautotrophic growth as well as for electron transfer efficiency and stability of the cytochrome b6-f complex. This is Cytochrome b6-f complex subunit 6 from Tupiella akineta (Green alga).